The sequence spans 533 residues: Putative phosphate permease jhp_1384 (533 aa).

12 helical membrane-spanning segments follow: residues 23–43 (IALA…FGQA), 47–67 (GLLL…IGAN), 81–101 (AISM…GAII), 129–149 (VMLA…LIGA), 156–176 (SVVG…AINW), 182–202 (IVAS…FFLM), 221–241 (VVPY…IVKV), 248–268 (VGFE…FILF), 286–306 (VNEL…FAHG), 338–358 (VPLW…SLYG), 372–392 (LDKM…LLAS), and 509–529 (LVTV…LGFI).

Belongs to the inorganic phosphate transporter (PiT) (TC 2.A.20) family.

The protein localises to the cell membrane. Potential transporter for phosphate. In Helicobacter pylori (strain J99 / ATCC 700824) (Campylobacter pylori J99), this protein is Putative phosphate permease jhp_1384.